We begin with the raw amino-acid sequence, 57 residues long: Potassium channel toxin alpha-KTx 23.3 (57 aa).

A signal peptide spans 1 to 23 (MKMSIVIILLLFTCLIATNGASG). Intrachain disulfides connect Cys26-Cys46, Cys32-Cys51, Cys36-Cys53, and Cys41-Cys56.

It belongs to the short scorpion toxin superfamily. Potassium channel inhibitor family. Alpha-KTx 23 subfamily. Expressed by the venom gland.

It localises to the secreted. In terms of biological role, this toxin shows both immunosuppressive and anti-inflammatory activities. It has the potential to inhibit human T cell activation, since it reduces IL-2 secretion and the expression of T cell activation marker CD69 and acts as an anti-inflammatory agent, since it provokes the reduction of secretion of both IFN-gamma and TNF-alpha. In vivo, the delayed-type hypersensitivity response in rat autoimmune disease model is ameliorated in the presence of this toxin. Acts by blocking Kv1.3/KCNA3 potassium channels of T-lymphocytes. This Scorpiops tibetanus (Scorpion) protein is Potassium channel toxin alpha-KTx 23.3.